The chain runs to 334 residues: MPTDAKRPLQLNDQGQLRHFISLDGLPRELLTEILDTADSFLEVGARAVKKVPLLRGKTVCNVFFENSTRTRTTFELAAQRLSADVISLNVSTSSTSKGETLTDTLRNLEAMAADMFVVRHSDSGAAHFIAEHVSPNVAVINGGDGRHAHPTQGMLDMLTIRRHKGNFEQLSVAIVGDILHSRVARSNMLALKTLGCPDIRVIAPRTLLPVGLEEQYGVRVFTNADEGLKDVDVVIMLRLQRERMQGGLLPSEGEFFRLYGLTEKRLKLARPDAIVMHPGPINRGVEIESAVADGAQSVILNQVTYGIAIRMAVLSMAMSGQNTQRQLEQEDAE.

Carbamoyl phosphate is bound by residues Arg-70 and Thr-71. Position 98 (Lys-98) interacts with L-aspartate. Arg-120, His-150, and Gln-153 together coordinate carbamoyl phosphate. Arg-183 and Arg-239 together coordinate L-aspartate. Gly-280 and Pro-281 together coordinate carbamoyl phosphate.

It belongs to the aspartate/ornithine carbamoyltransferase superfamily. ATCase family. Heterododecamer (2C3:3R2) of six catalytic PyrB chains organized as two trimers (C3), and six regulatory PyrI chains organized as three dimers (R2).

The enzyme catalyses carbamoyl phosphate + L-aspartate = N-carbamoyl-L-aspartate + phosphate + H(+). It functions in the pathway pyrimidine metabolism; UMP biosynthesis via de novo pathway; (S)-dihydroorotate from bicarbonate: step 2/3. Catalyzes the condensation of carbamoyl phosphate and aspartate to form carbamoyl aspartate and inorganic phosphate, the committed step in the de novo pyrimidine nucleotide biosynthesis pathway. This chain is Aspartate carbamoyltransferase catalytic subunit, found in Pseudomonas paraeruginosa (strain DSM 24068 / PA7) (Pseudomonas aeruginosa (strain PA7)).